The chain runs to 650 residues: Sterol O-acyltransferase 2 (650 aa).

Residues 41-79 (LTSSNNSCASEHEGEGEGEDERPATTSSAPTQNHSAGDV) form a disordered region. The span at 64–75 (ATTSSAPTQNHS) shows a compositional bias: polar residues. 5 helical membrane-spanning segments follow: residues 223–243 (FSGL…KALI), 300–320 (TGWA…MYLT), 412–432 (INVS…QIEY), 450–470 (IFGT…PVAM), and 493–513 (LLVD…YLIW). Positions 531–537 (FYGDWWN) match the FYXDWWN motif motif. Helical transmembrane passes span 575-595 (ATLM…YVIF) and 630-650 (VIFW…YLTF). The active site involves H587.

The protein belongs to the membrane-bound acyltransferase family. Sterol o-acyltransferase subfamily.

The protein resides in the endoplasmic reticulum membrane. Its function is as follows. Sterol O-acyltransferase that catalyzes the formation of stery esters. The protein is Sterol O-acyltransferase 2 (ARE2) of Saccharomyces uvarum (strain ATCC 76518 / CBS 7001 / CLIB 283 / NBRC 10550 / MCYC 623 / NCYC 2669 / NRRL Y-11845) (Yeast).